A 145-amino-acid chain; its full sequence is Aspartate 1-decarboxylase (145 aa).

Catalysis depends on serine 25, which acts as the Schiff-base intermediate with substrate; via pyruvic acid. A Pyruvic acid (Ser) modification is found at serine 25. Threonine 57 serves as a coordination point for substrate. Tyrosine 58 acts as the Proton donor in catalysis. 73 to 75 (GAA) lines the substrate pocket.

This sequence belongs to the PanD family. As to quaternary structure, heterooctamer of four alpha and four beta subunits. The cofactor is pyruvate. Is synthesized initially as an inactive proenzyme, which is activated by self-cleavage at a specific serine bond to produce a beta-subunit with a hydroxyl group at its C-terminus and an alpha-subunit with a pyruvoyl group at its N-terminus.

Its subcellular location is the cytoplasm. The catalysed reaction is L-aspartate + H(+) = beta-alanine + CO2. The protein operates within cofactor biosynthesis; (R)-pantothenate biosynthesis; beta-alanine from L-aspartate: step 1/1. Functionally, catalyzes the pyruvoyl-dependent decarboxylation of aspartate to produce beta-alanine. This Micrococcus luteus (strain ATCC 4698 / DSM 20030 / JCM 1464 / CCM 169 / CCUG 5858 / IAM 1056 / NBRC 3333 / NCIMB 9278 / NCTC 2665 / VKM Ac-2230) (Micrococcus lysodeikticus) protein is Aspartate 1-decarboxylase.